A 231-amino-acid chain; its full sequence is Dephospho-CoA kinase (231 aa).

In terms of domain architecture, DPCK spans 29 to 231; the sequence is RVGLTGGIAS…IAGALRFDRR (203 aa). ATP is bound at residue 37-42; the sequence is ASGKST.

It belongs to the CoaE family.

The protein resides in the cytoplasm. The enzyme catalyses 3'-dephospho-CoA + ATP = ADP + CoA + H(+). It participates in cofactor biosynthesis; coenzyme A biosynthesis; CoA from (R)-pantothenate: step 5/5. Its function is as follows. Catalyzes the phosphorylation of the 3'-hydroxyl group of dephosphocoenzyme A to form coenzyme A. This Cutibacterium acnes (strain DSM 16379 / KPA171202) (Propionibacterium acnes) protein is Dephospho-CoA kinase.